The primary structure comprises 34 residues: Cytochrome b6-f complex subunit 7 (34 aa).

Residues 9 to 27 (AILSFGLIFVGWGLGALLL) form a helical membrane-spanning segment.

This sequence belongs to the PetM family. The 4 large subunits of the cytochrome b6-f complex are cytochrome b6, subunit IV (17 kDa polypeptide, PetD), cytochrome f and the Rieske protein, while the 4 small subunits are PetG, PetL, PetM and PetN. The complex functions as a dimer.

It localises to the cellular thylakoid membrane. In terms of biological role, component of the cytochrome b6-f complex, which mediates electron transfer between photosystem II (PSII) and photosystem I (PSI), cyclic electron flow around PSI, and state transitions. The chain is Cytochrome b6-f complex subunit 7 from Nostoc punctiforme (strain ATCC 29133 / PCC 73102).